A 1018-amino-acid polypeptide reads, in one-letter code: MDKILEAVVTSSYPVSVKQGLVRRVLEAARQPLEREQCLALLALGARLYVGGAEELPRRVGCQLLHVAGRHHPDVFAEFFSARRVLRLLQGGAGPPGPRALACVQLGLQLLPEGPAADEVFALLRREVLRTVCERPGPAACAQVARLLARHPRCVPDGPHRLLFCQQLVRCLGRFRCPAEGEEGAVEFLEQAQQVSGLLAQLWRAQPAAILPCLKELFAVISCAEEEPPSSALASVVQHLPLELMDGVVRNLSNDDSVTDSQMLTAISRMIDWVSWPLGKNIDKWIIALLKGLAAVKKFSILIEVSLTKIEKVFSKLLYPIVRGAALSVLKYMLLTFQHSHEAFHLLLPHIPPMVASLVKEDSNSGTSCLEQLAELVHCMVFRFPGFPDLYEPVMEAIKDLHVPNEDRIKQLLGQDAWTSQKSELAGFYPRLMAKSDTGKIGLINLGNTCYVNSILQALFMASDFRHCVLRLTENNSQPLMTKLQWLFGFLEHSQRPAISPENFLSASWTPWFSPGTQQDCSEYLKYLLDRLHEEEKTGTRICQKLKQSSSPSPPEEPPAPSSTSVEKMFGGKIVTRICCLCCLNVSSREEAFTDLSLAFPPPERCRRRRLGSVMRPTEDITARELPPPTSAQGPGRVGPRRQRKHCITEDTPPTSLYIEGLDSKEAGGQSSQEERIEREEEGKEERTEKEEVGEEEESTRGEGEREKEEEVEEEEEKVEKETEKEAEQEKEEDSLGAGTHPDAAIPSGERTCGSEGSRSVLDLVNYFLSPEKLTAENRYYCESCASLQDAEKVVELSQGPCYLILTLLRFSFDLRTMRRRKILDDVSIPLLLRLPLAGGRGQAYDLCSVVVHSGVSSESGHYYCYAREGAARPAASLGTADRPEPENQWYLFNDTRVSFSSFESVSNVTSFFPKDTAYVLFYRQRPREGPEAELGSSRVRTEPTLHKDLMEAISKDNILYLQEQEKEARSRAAYISALPTSPHWGRGFDEDKDEDEGSPGGCNPAGGNGGDFHRLVF.

Positions 441 to 926 (IGLINLGNTC…TAYVLFYRQR (486 aa)) constitute a USP domain. Cysteine 450 functions as the Nucleophile in the catalytic mechanism. 2 disordered regions span residues 544–566 (QKLK…STSV) and 610–757 (RLGS…GSEG). A compositionally biased stretch (pro residues) spans 552–561 (PSPPEEPPAP). The residue at position 613 (serine 613) is a Phosphoserine. Basic and acidic residues-rich tracts occupy residues 673 to 691 (QEER…TEKE), 699 to 709 (STRGEGEREKE), and 718 to 728 (KVEKETEKEAE). Histidine 862 serves as the catalytic Proton acceptor. The tract at residues 984 to 1011 (HWGRGFDEDKDEDEGSPGGCNPAGGNGG) is disordered. Gly residues predominate over residues 999 to 1011 (SPGGCNPAGGNGG).

Belongs to the peptidase C19 family. Homodimer (via C-terminal region). Interacts with HSP90AA1. In terms of processing, ubiquitinated by CHIP/STUB1 in an HSP90-dependent manner; leading to proteasomal degradation. This ubiquitination can be reversed through auto-deubiquitinating activity. In terms of tissue distribution, expressed in testis, pancreas and skeletal muscle.

It is found in the cytoplasm. The protein resides in the mitochondrion. The enzyme catalyses Thiol-dependent hydrolysis of ester, thioester, amide, peptide and isopeptide bonds formed by the C-terminal Gly of ubiquitin (a 76-residue protein attached to proteins as an intracellular targeting signal).. Deubiquitinase that plays a role in different processes including cell cycle regulation, mitophagy or endoplasmic reticulum stress. Inhibits TNFalpha-induced NF-kappa-B activation through stabilizing TNIP2 protein via deubiquitination. Plays an essential role during mitosis by deubiquitinating and thereby regulating the levels of Aurora B/AURKB protein. In addition, regulates the protein levels of other key component of the chromosomal passenger complex (CPC) such as survivin/BIRC5 or Borealin/CDCA8 by enhancing their stability. Regulates the degradation of mitochondria through the process of autophagy termed mitophagy. This chain is Ubiquitin carboxyl-terminal hydrolase 35 (USP35), found in Homo sapiens (Human).